The sequence spans 201 residues: Holliday junction branch migration complex subunit RuvA (201 aa).

The interval 1 to 64 (MIGRLHGKII…EDAHLLFGFA (64 aa)) is domain I. Residues 65 to 143 (QKQDRTLFRE…GVAQSDFFEE (79 aa)) form a domain II region. The tract at residues 144-154 (HSVETIVATHS) is flexible linker. The domain III stretch occupies residues 154–201 (SHDPADEARDALVALGYKLADAEKMIKKVNKAGATSEQLIREALKASL).

This sequence belongs to the RuvA family. As to quaternary structure, homotetramer. Forms an RuvA(8)-RuvB(12)-Holliday junction (HJ) complex. HJ DNA is sandwiched between 2 RuvA tetramers; dsDNA enters through RuvA and exits via RuvB. An RuvB hexamer assembles on each DNA strand where it exits the tetramer. Each RuvB hexamer is contacted by two RuvA subunits (via domain III) on 2 adjacent RuvB subunits; this complex drives branch migration. In the full resolvosome a probable DNA-RuvA(4)-RuvB(12)-RuvC(2) complex forms which resolves the HJ.

The protein resides in the cytoplasm. In terms of biological role, the RuvA-RuvB-RuvC complex processes Holliday junction (HJ) DNA during genetic recombination and DNA repair, while the RuvA-RuvB complex plays an important role in the rescue of blocked DNA replication forks via replication fork reversal (RFR). RuvA specifically binds to HJ cruciform DNA, conferring on it an open structure. The RuvB hexamer acts as an ATP-dependent pump, pulling dsDNA into and through the RuvAB complex. HJ branch migration allows RuvC to scan DNA until it finds its consensus sequence, where it cleaves and resolves the cruciform DNA. This Actinobacillus pleuropneumoniae serotype 5b (strain L20) protein is Holliday junction branch migration complex subunit RuvA.